Reading from the N-terminus, the 490-residue chain is Type I restriction enzyme EcoEI methylase subunit (490 aa).

Residues 163 to 168, 193 to 195, and Glu-226 contribute to the S-adenosyl-L-methionine site; these read EFYTPR and TGG.

Belongs to the N(4)/N(6)-methyltransferase family. As to quaternary structure, the type I restriction/modification system is composed of three polypeptides R, M and S; the restriction enzyme has stoichiometry R(2)M(2)S(1) while the methyltransferase is M(2)S(1).

The enzyme catalyses a 2'-deoxyadenosine in DNA + S-adenosyl-L-methionine = an N(6)-methyl-2'-deoxyadenosine in DNA + S-adenosyl-L-homocysteine + H(+). Functionally, the subtype gamma methyltransferase (M) subunit of a type I restriction enzyme. The M and S subunits together form a methyltransferase (MTase) that methylates two adenine residues of the sequence 5'-GAGN(7)ATGC-3'. In the presence of the R subunit the complex can also act as an endonuclease, binding to the same target sequence but cutting the DNA some distance from this site. Whether the DNA is cut or modified depends on the methylation state of the target sequence. When the target site is unmodified, the DNA is cut. When the target site is hemimethylated, the complex acts as a maintenance MTase modifying the DNA so that both strands become methylated. After locating a non-methylated recognition site, the enzyme complex serves as a molecular motor that translocates DNA in an ATP-dependent manner until a collision occurs that triggers cleavage. This is Type I restriction enzyme EcoEI methylase subunit (hsdM) from Escherichia coli.